The sequence spans 417 residues: NADH-dependent phenylglyoxylate dehydrogenase subunit alpha (417 aa).

In terms of assembly, dimer of heteropentamers composed of an alpha (PadG), a beta (PadI), a gamma (PadE), a delta (PadF) and an epsilon (PadH) subunit.

It catalyses the reaction phenylglyoxylate + NAD(+) + CoA = benzoyl-CoA + CO2 + NADH. Activated by magnesium ions and thiamine diphosphate. Its function is as follows. Involved in the anaerobic metabolism of phenylalanine and phenylacetate. Catalyzes the oxidative decarboxylation of phenylglyoxylate to benzoyl-CoA and CO(2). It can also react slowly with 2-oxo-3-methylbutanoate and use different electron acceptors such as benzyl viologen, methyl viologen, FAD or FMN, but NAD seems to be the physiological electron acceptor. Also catalyzes an isotope exchange between CO(2) and the carboxyl group which proves partial or complete reversibility of the oxidative decarboxylation reaction. The chain is NADH-dependent phenylglyoxylate dehydrogenase subunit alpha (padG) from Aromatoleum evansii (Azoarcus evansii).